Reading from the N-terminus, the 119-residue chain is Large ribosomal subunit protein bL20 (119 aa).

The protein belongs to the bacterial ribosomal protein bL20 family.

Binds directly to 23S ribosomal RNA and is necessary for the in vitro assembly process of the 50S ribosomal subunit. It is not involved in the protein synthesizing functions of that subunit. The chain is Large ribosomal subunit protein bL20 from Streptococcus gordonii (strain Challis / ATCC 35105 / BCRC 15272 / CH1 / DL1 / V288).